The primary structure comprises 577 residues: Proline--tRNA ligase (577 aa).

The protein belongs to the class-II aminoacyl-tRNA synthetase family. ProS type 1 subfamily. Homodimer.

It is found in the cytoplasm. It catalyses the reaction tRNA(Pro) + L-proline + ATP = L-prolyl-tRNA(Pro) + AMP + diphosphate. Functionally, catalyzes the attachment of proline to tRNA(Pro) in a two-step reaction: proline is first activated by ATP to form Pro-AMP and then transferred to the acceptor end of tRNA(Pro). As ProRS can inadvertently accommodate and process non-cognate amino acids such as alanine and cysteine, to avoid such errors it has two additional distinct editing activities against alanine. One activity is designated as 'pretransfer' editing and involves the tRNA(Pro)-independent hydrolysis of activated Ala-AMP. The other activity is designated 'posttransfer' editing and involves deacylation of mischarged Ala-tRNA(Pro). The misacylated Cys-tRNA(Pro) is not edited by ProRS. The protein is Proline--tRNA ligase of Chlamydia felis (strain Fe/C-56) (Chlamydophila felis).